A 423-amino-acid chain; its full sequence is Imidazolonepropionase (423 aa).

2 residues coordinate Fe(3+): His87 and His89. Zn(2+)-binding residues include His87 and His89. 4-imidazolone-5-propanoate is bound by residues Arg96, Tyr159, and His192. Tyr159 contacts N-formimidoyl-L-glutamate. Position 257 (His257) interacts with Fe(3+). His257 contributes to the Zn(2+) binding site. Glu260 contacts 4-imidazolone-5-propanoate. Residue Asp331 participates in Fe(3+) binding. Zn(2+) is bound at residue Asp331. Residues Asn333 and Gly335 each coordinate N-formimidoyl-L-glutamate. Ser336 contributes to the 4-imidazolone-5-propanoate binding site.

It belongs to the metallo-dependent hydrolases superfamily. HutI family. Zn(2+) is required as a cofactor. Requires Fe(3+) as cofactor.

Its subcellular location is the cytoplasm. It catalyses the reaction 4-imidazolone-5-propanoate + H2O = N-formimidoyl-L-glutamate. It functions in the pathway amino-acid degradation; L-histidine degradation into L-glutamate; N-formimidoyl-L-glutamate from L-histidine: step 3/3. Its function is as follows. Catalyzes the hydrolytic cleavage of the carbon-nitrogen bond in imidazolone-5-propanoate to yield N-formimidoyl-L-glutamate. It is the third step in the universal histidine degradation pathway. The protein is Imidazolonepropionase of Porphyromonas gingivalis (strain ATCC 33277 / DSM 20709 / CIP 103683 / JCM 12257 / NCTC 11834 / 2561).